The sequence spans 306 residues: Ornithine carbamoyltransferase 1, anabolic (306 aa).

Carbamoyl phosphate is bound by residues 53-56, glutamine 80, arginine 104, and 131-134; these read STRT and HPCQ. L-ornithine is bound by residues asparagine 162, aspartate 219, and 223 to 224; that span reads SM. Residues 259 to 260 and arginine 287 contribute to the carbamoyl phosphate site; that span reads CL.

Belongs to the aspartate/ornithine carbamoyltransferase superfamily. OTCase family. Homotrimer.

Its subcellular location is the cytoplasm. It carries out the reaction carbamoyl phosphate + L-ornithine = L-citrulline + phosphate + H(+). Its pathway is amino-acid biosynthesis; L-arginine biosynthesis; L-arginine from L-ornithine and carbamoyl phosphate: step 1/3. Its activity is regulated as follows. Reversibly inhibited by inhibited by phaseolotoxin and octicidine. Reversibly catalyzes the transfer of the carbamoyl group from carbamoyl phosphate (CP) to the N(epsilon) atom of ornithine (ORN) to produce L-citrulline, which is a substrate for argininosuccinate synthetase, the enzyme involved in the final step in arginine biosynthesis. This chain is Ornithine carbamoyltransferase 1, anabolic, found in Pseudomonas savastanoi pv. phaseolicola (Pseudomonas syringae pv. phaseolicola).